The sequence spans 158 residues: RING-H2 finger protein ATL66 (158 aa).

A helical transmembrane segment spans residues 33-53 (LFFALALFSVVLFFALLTLYI). Residues 107–149 (CCICLGGFEEGEKMKVLPPCSHCYHCECVDRWLKTESSCPLCR) form an RING-type; atypical zinc finger.

This sequence belongs to the RING-type zinc finger family. ATL subfamily.

It is found in the membrane. It carries out the reaction S-ubiquitinyl-[E2 ubiquitin-conjugating enzyme]-L-cysteine + [acceptor protein]-L-lysine = [E2 ubiquitin-conjugating enzyme]-L-cysteine + N(6)-ubiquitinyl-[acceptor protein]-L-lysine.. It functions in the pathway protein modification; protein ubiquitination. The sequence is that of RING-H2 finger protein ATL66 (ATL66) from Arabidopsis thaliana (Mouse-ear cress).